Reading from the N-terminus, the 133-residue chain is Homeobox protein HD-5 (133 aa).

The segment at residues 34–93 (SKRSRLKLSGQQIDVLESNFKIDSHPNSATKSLLSNALSIPLKNIQIWFQNRRAKEKTAR) is a DNA-binding region (homeobox). Residues 86 to 109 (RAKEKTARDGGRRRSGNAEIEDGE) are disordered.

It is found in the nucleus. This chain is Homeobox protein HD-5 (HD-5), found in Encephalitozoon cuniculi (strain GB-M1) (Microsporidian parasite).